The chain runs to 214 residues: Thymidylate kinase (214 aa).

12–19 (GLDGSGKS) provides a ligand contact to ATP.

Belongs to the thymidylate kinase family.

The catalysed reaction is dTMP + ATP = dTDP + ADP. Phosphorylation of dTMP to form dTDP in both de novo and salvage pathways of dTTP synthesis. The protein is Thymidylate kinase of Bdellovibrio bacteriovorus (strain ATCC 15356 / DSM 50701 / NCIMB 9529 / HD100).